The chain runs to 451 residues: UDP-N-acetylmuramate--L-alanine ligase (451 aa).

110 to 116 (GTHGKTT) provides a ligand contact to ATP.

It belongs to the MurCDEF family.

It is found in the cytoplasm. It catalyses the reaction UDP-N-acetyl-alpha-D-muramate + L-alanine + ATP = UDP-N-acetyl-alpha-D-muramoyl-L-alanine + ADP + phosphate + H(+). Its pathway is cell wall biogenesis; peptidoglycan biosynthesis. In terms of biological role, cell wall formation. The chain is UDP-N-acetylmuramate--L-alanine ligase from Francisella tularensis subsp. tularensis (strain SCHU S4 / Schu 4).